We begin with the raw amino-acid sequence, 162 residues long: MAIKKLVPASHPILTKKAQAVIKFDDSLKRLLQDLEDTMYAQEAAGLCAPQINQSLQVAIIDMEMEGLLQLVNPKIISQSNETITDLEGSITLPDVYGEVTRSKMIVVESYDVNGNKVELTAHEDVARMILHIIDQMNGIPFTERADRILTDKEVEAYFIND.

It belongs to the polypeptide deformylase family.

This Staphylococcus aureus (strain MRSA252) protein is Peptide deformylase-like.